The following is a 239-amino-acid chain: Ribonuclease PH (239 aa).

Phosphate-binding positions include Arg87 and 125–127 (GTR).

Belongs to the RNase PH family. Homohexameric ring arranged as a trimer of dimers.

The enzyme catalyses tRNA(n+1) + phosphate = tRNA(n) + a ribonucleoside 5'-diphosphate. Functionally, phosphorolytic 3'-5' exoribonuclease that plays an important role in tRNA 3'-end maturation. Removes nucleotide residues following the 3'-CCA terminus of tRNAs; can also add nucleotides to the ends of RNA molecules by using nucleoside diphosphates as substrates, but this may not be physiologically important. Probably plays a role in initiation of 16S rRNA degradation (leading to ribosome degradation) during starvation. The sequence is that of Ribonuclease PH from Cyanothece sp. (strain PCC 7425 / ATCC 29141).